Reading from the N-terminus, the 87-residue chain is DNA-directed RNA polymerase subunit omega (87 aa).

It belongs to the RNA polymerase subunit omega family. The RNAP catalytic core consists of 2 alpha, 1 beta, 1 beta' and 1 omega subunit. When a sigma factor is associated with the core the holoenzyme is formed, which can initiate transcription.

It carries out the reaction RNA(n) + a ribonucleoside 5'-triphosphate = RNA(n+1) + diphosphate. Functionally, promotes RNA polymerase assembly. Latches the N- and C-terminal regions of the beta' subunit thereby facilitating its interaction with the beta and alpha subunits. The sequence is that of DNA-directed RNA polymerase subunit omega from Acidothermus cellulolyticus (strain ATCC 43068 / DSM 8971 / 11B).